Consider the following 76-residue polypeptide: RNA-binding protein KhpA (76 aa).

The 48-residue stretch at 29 to 76 (SLHIELSVHPDDMGKVIGKQGRTAKALRSVVYAAATKQKRRVRLDIID) folds into the KH domain.

It belongs to the KhpA RNA-binding protein family. In terms of assembly, forms a complex with KhpB.

The protein resides in the cytoplasm. Functionally, a probable RNA chaperone. Forms a complex with KhpB which binds to cellular RNA and controls its expression. Plays a role in peptidoglycan (PG) homeostasis and cell length regulation. The protein is RNA-binding protein KhpA of Halalkalibacterium halodurans (strain ATCC BAA-125 / DSM 18197 / FERM 7344 / JCM 9153 / C-125) (Bacillus halodurans).